Consider the following 215-residue polypeptide: MSGGDGIPTFKLVLVGDGGTGKTTFVKRHLTGEFEKKYVATLGVEVHPLVFHTNRGQIRFNVWDTAGQEKFGGLRDGYYIQGQCAIIMFDVTARVTYKNVPNWHRDLARVCENIPIVLCGNKVDVKDRKVKAKTITFHRKKNLQYYDISAKSNYNFEKPFLWLARKLLGDPNLEFVAMPALAPPEVQMDPAMIAEYEKDLDNAAKADLPDDDDDL.

A Small GTPase Ran-type domain is found at 6 to 170 (GIPTFKLVLV…LWLARKLLGD (165 aa)). 17–24 (DGGTGKTT) provides a ligand contact to GTP. Residues 36–44 (KKYVATLGV) are switch-I. GTP contacts are provided by residues glycine 67, 121–124 (NKVD), and 149–151 (SAK). A switch-II region spans residues 67–83 (GQEKFGGLRDGYYIQGQ).

The protein belongs to the small GTPase superfamily. Ran family. Found in a nuclear export complex with RanGTP, exportin and pre-miRNA.

The protein localises to the nucleus. The protein resides in the chromosome. Its subcellular location is the centromere. It localises to the kinetochore. Functionally, ran GTPase system comprises ran-1, ran-2 and ran-3 and is essential in nucleocytoplasmic transport. Ran-1 is a GTP-binding protein that mediates the interaction between mitotic chromosomes and kinetochore microtubules. Plays a crucial role in nuclear envelope assembly at the end of each cell division. Required for the import of protein into the nucleus and also for RNA export. RCC1 (ran-3)/Ran (ran-1) complex (together with other proteins) acts as a component of a signal transmission pathway that detects unreplicated DNA. The polypeptide is GTP-binding nuclear protein ran-1 (ran-1) (Caenorhabditis elegans).